The following is a 281-amino-acid chain: GPN-loop GTPase 3 (281 aa).

13 to 18 (GSGKST) lines the GTP pocket. The Gly-Pro-Asn (GPN)-loop; involved in dimer interface motif lies at 70-72 (GPN). 173–176 (SKMD) is a GTP binding site. The segment at 259-281 (VQYGEDEEPKEPKDMDEGDFTAQ) is disordered.

It belongs to the GPN-loop GTPase family. Heterodimers with GPN1 or GPN2. Binds to RNA polymerase II (RNAPII).

Functionally, small GTPase required for proper nuclear import of RNA polymerase II and III (RNAPII and RNAPIII). May act at an RNAP assembly step prior to nuclear import. This is GPN-loop GTPase 3 from Mycosarcoma maydis (Corn smut fungus).